We begin with the raw amino-acid sequence, 709 residues long: Elongation factor G (709 aa).

The region spanning 8–297 (ANTRNIGIMA…AVIDYLPSPL (290 aa)) is the tr-type G domain. Residues 17–24 (AHVDAGKT), 81–85 (DTPGH), and 135–138 (NKMD) contribute to the GTP site.

Belongs to the TRAFAC class translation factor GTPase superfamily. Classic translation factor GTPase family. EF-G/EF-2 subfamily.

It is found in the cytoplasm. Its function is as follows. Catalyzes the GTP-dependent ribosomal translocation step during translation elongation. During this step, the ribosome changes from the pre-translocational (PRE) to the post-translocational (POST) state as the newly formed A-site-bound peptidyl-tRNA and P-site-bound deacylated tRNA move to the P and E sites, respectively. Catalyzes the coordinated movement of the two tRNA molecules, the mRNA and conformational changes in the ribosome. This is Elongation factor G from Lactococcus lactis subsp. lactis (strain IL1403) (Streptococcus lactis).